Here is a 189-residue protein sequence, read N- to C-terminus: Xanthine phosphoribosyltransferase (189 aa).

2 residues coordinate xanthine: leucine 20 and asparagine 27. 128-132 is a 5-phospho-alpha-D-ribose 1-diphosphate binding site; the sequence is ANGQA. A xanthine-binding site is contributed by lysine 156.

This sequence belongs to the purine/pyrimidine phosphoribosyltransferase family. Xpt subfamily. In terms of assembly, homodimer.

Its subcellular location is the cytoplasm. The catalysed reaction is XMP + diphosphate = xanthine + 5-phospho-alpha-D-ribose 1-diphosphate. It participates in purine metabolism; XMP biosynthesis via salvage pathway; XMP from xanthine: step 1/1. In terms of biological role, converts the preformed base xanthine, a product of nucleic acid breakdown, to xanthosine 5'-monophosphate (XMP), so it can be reused for RNA or DNA synthesis. The polypeptide is Xanthine phosphoribosyltransferase (Leuconostoc mesenteroides subsp. mesenteroides (strain ATCC 8293 / DSM 20343 / BCRC 11652 / CCM 1803 / JCM 6124 / NCDO 523 / NBRC 100496 / NCIMB 8023 / NCTC 12954 / NRRL B-1118 / 37Y)).